Consider the following 389-residue polypeptide: Chalcone synthase (389 aa).

The active site involves cysteine 164.

The protein belongs to the thiolase-like superfamily. Chalcone/stilbene synthases family.

The catalysed reaction is (E)-4-coumaroyl-CoA + 3 malonyl-CoA + 3 H(+) = 2',4,4',6'-tetrahydroxychalcone + 3 CO2 + 4 CoA. Its pathway is secondary metabolite biosynthesis; flavonoid biosynthesis. The primary product of this enzyme is 4,2',4',6'-tetrahydroxychalcone (also termed naringenin-chalcone or chalcone) which can under specific conditions spontaneously isomerize into naringenin. This Catharanthus roseus (Madagascar periwinkle) protein is Chalcone synthase (CHS).